Reading from the N-terminus, the 380-residue chain is Cytochrome b (380 aa).

4 consecutive transmembrane segments (helical) span residues 34–54 (FGSL…LLAM), 78–99 (WLIR…YLHI), 114–134 (WNTG…GYVL), and 179–199 (FFAL…IHLT). Heme b is bound by residues His84 and His98. Heme b contacts are provided by His183 and His197. His202 is a binding site for a ubiquinone. Helical transmembrane passes span 227 to 247 (LKDI…ALFS), 289 to 309 (LGGV…PFLH), 321 to 341 (LSQL…WVGS), and 348 to 368 (FIII…ILFP).

The protein belongs to the cytochrome b family. The cytochrome bc1 complex contains 11 subunits: 3 respiratory subunits (MT-CYB, CYC1 and UQCRFS1), 2 core proteins (UQCRC1 and UQCRC2) and 6 low-molecular weight proteins (UQCRH/QCR6, UQCRB/QCR7, UQCRQ/QCR8, UQCR10/QCR9, UQCR11/QCR10 and a cleavage product of UQCRFS1). This cytochrome bc1 complex then forms a dimer. Heme b serves as cofactor.

Its subcellular location is the mitochondrion inner membrane. Component of the ubiquinol-cytochrome c reductase complex (complex III or cytochrome b-c1 complex) that is part of the mitochondrial respiratory chain. The b-c1 complex mediates electron transfer from ubiquinol to cytochrome c. Contributes to the generation of a proton gradient across the mitochondrial membrane that is then used for ATP synthesis. The protein is Cytochrome b (MT-CYB) of Ardenna tenuirostris (Short-tailed shearwater).